A 29-amino-acid chain; its full sequence is GGPAAYSXYXNGADFGAVGEXLGSXSKGL.

In terms of biological role, component of the cuticle of migratory locust which contains more than 100 different structural proteins. The sequence is that of Cuticle protein 36 from Locusta migratoria (Migratory locust).